A 246-amino-acid chain; its full sequence is 4-aminobenzoate synthase (246 aa).

6 residues coordinate Fe(2+): E88, H95, E149, H181, D185, and H188.

The protein belongs to the CADD family. Homodimer. It depends on Fe(2+) as a cofactor. Requires Mn(2+) as cofactor.

Functionally, involved in de novo para-aminobenzoate (PABA) biosynthesis. Acts as a self-sacrificing or 'suicide' enzyme that utilizes its own active site tyrosine residue(s) as the substrate for PABA synthesis. The side chain of the tyrosine residue is released from the protein backbone via cleavage of the C(alpha)-C(beta) bond, leaving a glycine in place of the original tyrosine residue. Reaction requires O(2) and a reduced dimetal cofactor. This Nitrosomonas europaea (strain ATCC 19718 / CIP 103999 / KCTC 2705 / NBRC 14298) protein is 4-aminobenzoate synthase.